The following is a 122-amino-acid chain: Small ribosomal subunit protein uS13 (122 aa).

Positions 95–122 (GLPVRGQRTHTNARTRKGPAKSIAGKKK) are disordered.

Belongs to the universal ribosomal protein uS13 family. Part of the 30S ribosomal subunit. Forms a loose heterodimer with protein S19. Forms two bridges to the 50S subunit in the 70S ribosome.

In terms of biological role, located at the top of the head of the 30S subunit, it contacts several helices of the 16S rRNA. In the 70S ribosome it contacts the 23S rRNA (bridge B1a) and protein L5 of the 50S subunit (bridge B1b), connecting the 2 subunits; these bridges are implicated in subunit movement. Contacts the tRNAs in the A and P-sites. The protein is Small ribosomal subunit protein uS13 of Rhodopseudomonas palustris (strain BisB18).